The primary structure comprises 273 residues: Large ribosomal subunit protein uL2cz/uL2cy (273 aa).

Positions 224–273 are disordered; sequence NPVDHPHGGGEGRAPIGRKKPATPWGYPALGRRSRKRNKYSDRFILRRRK. Residues 262 to 273 show a composition bias toward basic and acidic residues; it reads KYSDRFILRRRK.

It belongs to the universal ribosomal protein uL2 family. In terms of assembly, part of the 50S ribosomal subunit.

Its subcellular location is the plastid. It is found in the chloroplast. The chain is Large ribosomal subunit protein uL2cz/uL2cy (rpl2-A) from Piper cenocladum (Ant piper).